Reading from the N-terminus, the 160-residue chain is Thy-1 membrane glycoprotein (160 aa).

Positions 1-19 (MNPTVSIAVILTVLQAAHC) are cleaved as a signal peptide. Gln-20 is subject to Pyrrolidone carboxylic acid. The 101-residue stretch at 20 to 120 (QMIRDLSACL…YTGNQIKNIT (101 aa)) folds into the Ig-like V-type domain. Intrachain disulfides connect Cys-28-Cys-129 and Cys-38-Cys-103. N-linked (GlcNAc...) asparagine glycans are attached at residues Asn-42, Asn-78, and Asn-118. Cys-129 is lipidated: GPI-anchor amidated cysteine. Residues 130 to 160 (VRLSLLIQNTSWLLLLLLSLPLLQAVDFVSL) constitute a propeptide, removed in mature form. A glycan (N-linked (GlcNAc...) asparagine) is linked at Asn-138.

In terms of processing, the N-terminus is blocked. As to expression, forebrain, cerebellum and tectum.

The protein localises to the cell membrane. May play a role in cell-cell or cell-ligand interactions during synaptogenesis and other events in the brain. The polypeptide is Thy-1 membrane glycoprotein (THY1) (Gallus gallus (Chicken)).